The following is a 501-amino-acid chain: Cytochrome P450 4d2 (501 aa).

Heme-binding residues include glutamate 311 and cysteine 449.

The protein belongs to the cytochrome P450 family. It depends on heme as a cofactor.

It is found in the endoplasmic reticulum membrane. It localises to the microsome membrane. Involved in the metabolism of insect hormones and in the breakdown of synthetic insecticides. In Drosophila melanogaster (Fruit fly), this protein is Cytochrome P450 4d2 (Cyp4d2).